The chain runs to 150 residues: Deoxyuridine 5'-triphosphate nucleotidohydrolase (150 aa).

Residues 69 to 71 (RSG), Asn82, 86 to 88 (LID), and Met96 contribute to the substrate site.

It belongs to the dUTPase family. The cofactor is Mg(2+).

The enzyme catalyses dUTP + H2O = dUMP + diphosphate + H(+). The protein operates within pyrimidine metabolism; dUMP biosynthesis; dUMP from dCTP (dUTP route): step 2/2. Its function is as follows. This enzyme is involved in nucleotide metabolism: it produces dUMP, the immediate precursor of thymidine nucleotides and it decreases the intracellular concentration of dUTP so that uracil cannot be incorporated into DNA. The polypeptide is Deoxyuridine 5'-triphosphate nucleotidohydrolase (Alcanivorax borkumensis (strain ATCC 700651 / DSM 11573 / NCIMB 13689 / SK2)).